A 193-amino-acid chain; its full sequence is Ion-translocating oxidoreductase complex subunit A (193 aa).

A run of 6 helical transmembrane segments spans residues 5-25 (LLLFVGTVLVNNFVLVKFLGL), 47-67 (FVMTLASICAWLIDTWILIPL), 72-92 (LRTLSFILVIAVVVQFTEMVV), 102-122 (LLGIFLPLITTNCAVLGVALL), 134-154 (ALYGFSAAVGFSLVMVLFAAI), and 171-191 (AIALITAGLMSLAFMGFSGLV).

Belongs to the NqrDE/RnfAE family. The complex is composed of six subunits: RsxA, RsxB, RsxC, RsxD, RsxE and RsxG.

It localises to the cell inner membrane. Functionally, part of a membrane-bound complex that couples electron transfer with translocation of ions across the membrane. Required to maintain the reduced state of SoxR. The protein is Ion-translocating oxidoreductase complex subunit A of Salmonella arizonae (strain ATCC BAA-731 / CDC346-86 / RSK2980).